Here is a 179-residue protein sequence, read N- to C-terminus: Large ribosomal subunit protein uL5 (179 aa).

The protein belongs to the universal ribosomal protein uL5 family. Part of the 50S ribosomal subunit; part of the 5S rRNA/L5/L18/L25 subcomplex. Contacts the 5S rRNA and the P site tRNA. Forms a bridge to the 30S subunit in the 70S ribosome.

Functionally, this is one of the proteins that bind and probably mediate the attachment of the 5S RNA into the large ribosomal subunit, where it forms part of the central protuberance. In the 70S ribosome it contacts protein S13 of the 30S subunit (bridge B1b), connecting the 2 subunits; this bridge is implicated in subunit movement. Contacts the P site tRNA; the 5S rRNA and some of its associated proteins might help stabilize positioning of ribosome-bound tRNAs. The protein is Large ribosomal subunit protein uL5 of Rickettsia peacockii (strain Rustic).